A 94-amino-acid chain; its full sequence is Long neurotoxin LNTX37 (94 aa).

The N-terminal stretch at 1 to 21 (MKTLLLTLVVVTIMCLDLGYT) is a signal peptide. 5 cysteine pairs are disulfide-bonded: C24–C43, C36–C64, C49–C53, C68–C79, and C80–C85.

Belongs to the three-finger toxin family. Long-chain subfamily. Type II alpha-neurotoxin sub-subfamily. As to expression, expressed by the venom gland.

It is found in the secreted. In terms of biological role, binds with high affinity to muscular (alpha-1/CHRNA1) and neuronal (alpha-7/CHRNA7) nicotinic acetylcholine receptor (nAChR) and inhibits acetylcholine from binding to the receptor, thereby impairing neuromuscular and neuronal transmission. The chain is Long neurotoxin LNTX37 from Ophiophagus hannah (King cobra).